The chain runs to 234 residues: Ribose-5-phosphate isomerase A (234 aa).

Residues 35–38, 91–94, and 105–108 contribute to the substrate site; these read SGTT, DGAD, and KGGG. The Proton acceptor role is filled by Glu114. Lys132 lines the substrate pocket.

Belongs to the ribose 5-phosphate isomerase family. As to quaternary structure, homodimer.

It carries out the reaction aldehydo-D-ribose 5-phosphate = D-ribulose 5-phosphate. It participates in carbohydrate degradation; pentose phosphate pathway; D-ribose 5-phosphate from D-ribulose 5-phosphate (non-oxidative stage): step 1/1. In terms of biological role, catalyzes the reversible conversion of ribose-5-phosphate to ribulose 5-phosphate. In Methanococcus aeolicus (strain ATCC BAA-1280 / DSM 17508 / OCM 812 / Nankai-3), this protein is Ribose-5-phosphate isomerase A.